Reading from the N-terminus, the 247-residue chain is Segregation and condensation protein A (247 aa).

It belongs to the ScpA family. In terms of assembly, component of a cohesin-like complex composed of ScpA, ScpB and the Smc homodimer, in which ScpA and ScpB bind to the head domain of Smc. The presence of the three proteins is required for the association of the complex with DNA.

The protein resides in the cytoplasm. Participates in chromosomal partition during cell division. May act via the formation of a condensin-like complex containing Smc and ScpB that pull DNA away from mid-cell into both cell halves. This chain is Segregation and condensation protein A, found in Lactobacillus gasseri (strain ATCC 33323 / DSM 20243 / BCRC 14619 / CIP 102991 / JCM 1131 / KCTC 3163 / NCIMB 11718 / NCTC 13722 / AM63).